Consider the following 446-residue polypeptide: Chromosomal replication initiator protein DnaA (446 aa).

The interval 1 to 81 is domain I, interacts with DnaA modulators; it reads MENISDLWNS…AKLAIRFIIP (81 aa). The domain II stretch occupies residues 81–109; sequence PQSQAEEDIDLPSVKQKHAHDESNHLPQS. Residues 110 to 326 are domain III, AAA+ region; that stretch reads MLNPKYTFDT…GALIRVVAYS (217 aa). ATP is bound by residues glycine 154, glycine 156, lysine 157, and threonine 158. The segment at 327–446 is domain IV, binds dsDNA; that stretch reads SLINKDMNAD…HVEEVKDILK (120 aa).

It belongs to the DnaA family. In terms of assembly, oligomerizes as a right-handed, spiral filament on DNA at oriC.

The protein localises to the cytoplasm. Its function is as follows. Plays an essential role in the initiation and regulation of chromosomal replication. ATP-DnaA binds to the origin of replication (oriC) to initiate formation of the DNA replication initiation complex once per cell cycle. Binds the DnaA box (a 9 base pair repeat at the origin) and separates the double-stranded (ds)DNA. Forms a right-handed helical filament on oriC DNA; dsDNA binds to the exterior of the filament while single-stranded (ss)DNA is stabiized in the filament's interior. The ATP-DnaA-oriC complex binds and stabilizes one strand of the AT-rich DNA unwinding element (DUE), permitting loading of DNA polymerase. After initiation quickly degrades to an ADP-DnaA complex that is not apt for DNA replication. Binds acidic phospholipids. The sequence is that of Chromosomal replication initiator protein DnaA from Bacillus mycoides (strain KBAB4) (Bacillus weihenstephanensis).